A 51-amino-acid polypeptide reads, in one-letter code: Insulin (51 aa).

Intrachain disulfides connect Cys8–Cys37, Cys20–Cys50, and Cys36–Cys41.

This sequence belongs to the insulin family. In terms of assembly, heterodimer of a B chain and an A chain linked by two disulfide bonds.

The protein resides in the secreted. Insulin decreases blood glucose concentration. It increases cell permeability to monosaccharides, amino acids and fatty acids. It accelerates glycolysis, the pentose phosphate cycle, and glycogen synthesis in liver. The chain is Insulin from Pagrus major (Red sea bream).